The chain runs to 195 residues: Probable molybdenum cofactor guanylyltransferase (195 aa).

GTP-binding positions include leucine 9 to glycine 11, lysine 21, aspartate 69, and aspartate 100. Aspartate 100 serves as a coordination point for Mg(2+).

The protein belongs to the MobA family. Requires Mg(2+) as cofactor.

It is found in the cytoplasm. The catalysed reaction is Mo-molybdopterin + GTP + H(+) = Mo-molybdopterin guanine dinucleotide + diphosphate. Transfers a GMP moiety from GTP to Mo-molybdopterin (Mo-MPT) cofactor (Moco or molybdenum cofactor) to form Mo-molybdopterin guanine dinucleotide (Mo-MGD) cofactor. This Geobacillus sp. (strain WCH70) protein is Probable molybdenum cofactor guanylyltransferase.